The chain runs to 187 residues: Benzene 1,2-dioxygenase subunit beta (187 aa).

It belongs to the bacterial ring-hydroxylating dioxygenase beta subunit family. This dioxygenase system consists of four proteins: the two subunits of the hydroxylase component (BedC1 and BedC2), a ferredoxin (BedB) and a ferredoxin reductase (BedA).

It catalyses the reaction benzene + NADH + O2 + H(+) = cis-1,2-dihydrobenzene-1,2-diol + NAD(+). It functions in the pathway aromatic compound metabolism; benzene degradation; catechol from benzene: step 1/2. In terms of biological role, the beta subunit may be responsible for the substrate specificity of the enzyme. The protein is Benzene 1,2-dioxygenase subunit beta (bedC2) of Pseudomonas putida (Arthrobacter siderocapsulatus).